Consider the following 496-residue polypeptide: Transcription factor CP2 (496 aa).

The Grh/CP2 DB domain occupies 61–300; that stretch reads ENKILPFQYV…SPGFNSSHSS (240 aa). Residues 133–386 form a DNA-binding region; it reads EHQQLEGWRW…LFNALKGRMV (254 aa). Disordered stretches follow at residues 238-268 and 296-327; these read FKPKGADRKQKTDREKMEKRTPHEKEKYQPS and SSHSSFSIGEGNGSPNHQPEPPPPIADNLLPT. Over residues 241–265 the composition is skewed to basic and acidic residues; sequence KGADRKQKTDREKMEKRTPHEKEKY.

This sequence belongs to the grh/CP2 family. CP2 subfamily. As to quaternary structure, component of the SSP (stage selector protein) complex, which appears to be a heteromer of TFCP2 and 2 copies of NFE4. As to expression, expressed in the epiblast at the pre-primitive streak stage. At the primitive streak stage, expressed in the extending primitive streak and in the prospective neural plate. At stages 7 and 8, expressed in the neural folds, somites and in the regressing primitive streak. At stage 12, ubiquitously expressed in the whole embryo.

The protein localises to the nucleus. Binds the B-response element 5'-CAAGTCCAGGCAAGT-3' of the ENS1/ERNI promoter. May be the major transcription activator thus being essential for its expression. This is Transcription factor CP2 (TFCP2) from Gallus gallus (Chicken).